We begin with the raw amino-acid sequence, 189 residues long: Crossover junction endodeoxyribonuclease RuvC (189 aa).

Active-site residues include aspartate 7, glutamate 68, and aspartate 141. Residues aspartate 7, glutamate 68, and aspartate 141 each coordinate Mg(2+).

It belongs to the RuvC family. Homodimer which binds Holliday junction (HJ) DNA. The HJ becomes 2-fold symmetrical on binding to RuvC with unstacked arms; it has a different conformation from HJ DNA in complex with RuvA. In the full resolvosome a probable DNA-RuvA(4)-RuvB(12)-RuvC(2) complex forms which resolves the HJ. Requires Mg(2+) as cofactor.

It localises to the cytoplasm. The enzyme catalyses Endonucleolytic cleavage at a junction such as a reciprocal single-stranded crossover between two homologous DNA duplexes (Holliday junction).. In terms of biological role, the RuvA-RuvB-RuvC complex processes Holliday junction (HJ) DNA during genetic recombination and DNA repair. Endonuclease that resolves HJ intermediates. Cleaves cruciform DNA by making single-stranded nicks across the HJ at symmetrical positions within the homologous arms, yielding a 5'-phosphate and a 3'-hydroxyl group; requires a central core of homology in the junction. The consensus cleavage sequence is 5'-(A/T)TT(C/G)-3'. Cleavage occurs on the 3'-side of the TT dinucleotide at the point of strand exchange. HJ branch migration catalyzed by RuvA-RuvB allows RuvC to scan DNA until it finds its consensus sequence, where it cleaves and resolves the cruciform DNA. This chain is Crossover junction endodeoxyribonuclease RuvC, found in Rhodococcus jostii (strain RHA1).